The sequence spans 311 residues: Serine hydrolase-like protein (311 aa).

One can recognise an AB hydrolase-1 domain in the interval 27-227 (PPVLCLHGWL…FVSKEMFVHS (201 aa)). S102 is a catalytic residue. S210 carries the post-translational modification Phosphoserine.

This sequence belongs to the AB hydrolase superfamily. As to expression, ubiquitous. High protein expression in skeletal and cardiac muscle.

The protein localises to the cytoplasm. It localises to the perinuclear region. Its subcellular location is the peroxisome. In terms of biological role, probable serine hydrolase. May be related to cell muscle hypertrophy. This is Serine hydrolase-like protein (Serhl) from Mus musculus (Mouse).